The following is a 271-amino-acid chain: Plasmanylethanolamine desaturase 1 (271 aa).

Residues 1 to 25 (MAGAEDAPGRQPELDEDETAEGRRW) form a disordered region. 3 consecutive transmembrane segments (helical) span residues 48 to 68 (WCSV…LLLL), 75 to 95 (PLVI…SGLV), and 166 to 186 (LYPW…TNQI). Residues 187 to 191 (HKWSH) carry the Histidine box-1 motif. The short motif at 214–218 (HHRIH) is the Histidine box-2 element.

It belongs to the fatty acid desaturase CarF family.

It is found in the endoplasmic reticulum membrane. It carries out the reaction a 1-(1,2-saturated alkyl)-2-acyl-sn-glycero-3-phosphoethanolamine + 2 Fe(II)-[cytochrome b5] + O2 + 2 H(+) = a 1-O-(1Z-alkenyl)-2-acyl-sn-glycero-3-phosphoethanolamine + 2 Fe(III)-[cytochrome b5] + 2 H2O. The catalysed reaction is a 1-O-hexadecyl-2-acyl-sn-glycero-3-phosphoethanolamine + 2 Fe(II)-[cytochrome b5] + O2 + 2 H(+) = a 1-O-(1Z-hexadecenyl)-2-acyl-sn-glycero-3-phosphoethanolamine + 2 Fe(III)-[cytochrome b5] + 2 H2O. The enzyme catalyses a 1-O-octadecyl-2-acyl-sn-glycero-3-phosphoethanolamine + 2 Fe(II)-[cytochrome b5] + O2 + 2 H(+) = a 1-O-(1Z-octadecenyl)-2-acyl-sn-glycero-3-phosphoethanolamine + 2 Fe(III)-[cytochrome b5] + 2 H2O. It catalyses the reaction a 1-O-(9Z-octadecenyl)-2-acyl-sn-glycero-3-phosphoethanolamine + 2 Fe(II)-[cytochrome b5] + O2 + 2 H(+) = a 1-O-(1Z,9Z-octadecadienyl)-2-acyl-sn-glycero-3-phosphoethanolamine + 2 Fe(III)-[cytochrome b5] + 2 H2O. It functions in the pathway lipid metabolism; fatty acid metabolism. Plasmanylethanolamine desaturase involved in plasmalogen biogenesis in the endoplasmic reticulum membrane. Plasmalogens are glycerophospholipids with a hydrocarbon chain linked by a vinyl ether bond at the glycerol sn-1 position, and are involved in antioxidative and signaling mechanisms. The sequence is that of Plasmanylethanolamine desaturase 1 from Mus musculus (Mouse).